The sequence spans 198 residues: Putative peptidyl-prolyl cis-trans isomerase (198 aa).

The PPIase cyclophilin-type domain occupies 14–195; the sequence is NEIKVAMHTN…HDVVIESIDV (182 aa).

The protein belongs to the cyclophilin-type PPIase family.

The catalysed reaction is [protein]-peptidylproline (omega=180) = [protein]-peptidylproline (omega=0). Functionally, PPIases accelerate the folding of proteins. It catalyzes the cis-trans isomerization of proline imidic peptide bonds in oligopeptides. The chain is Putative peptidyl-prolyl cis-trans isomerase from Staphylococcus haemolyticus (strain JCSC1435).